Consider the following 98-residue polypeptide: Trp operon repressor homolog (98 aa).

Residues 59–82 (QRQVSQMLGVGVATITRGSNELKA) mediate DNA binding.

This sequence belongs to the TrpR family. In terms of assembly, homodimer.

Its subcellular location is the cytoplasm. In terms of biological role, this protein is an aporepressor. When complexed with L-tryptophan it binds the operator region of the trp operon and prevents the initiation of transcription. The protein is Trp operon repressor homolog of Vibrio atlanticus (strain LGP32) (Vibrio splendidus (strain Mel32)).